Here is a 317-residue protein sequence, read N- to C-terminus: Putative ribosomal protein uL10-like (317 aa).

The residue at position 24 (tyrosine 24) is a Phosphotyrosine. The residue at position 59 (threonine 59) is a Phosphothreonine. Positions 292–317 (AAAPAKVEAKEESEESDEDMGFGLFD) are disordered. Lysine 297 participates in a covalent cross-link: Glycyl lysine isopeptide (Lys-Gly) (interchain with G-Cter in SUMO1); alternate. A Glycyl lysine isopeptide (Lys-Gly) (interchain with G-Cter in SUMO2); alternate cross-link involves residue lysine 297. Residues 302–311 (EESEESDEDM) are compositionally biased toward acidic residues. 2 positions are modified to phosphoserine: serine 304 and serine 307.

This sequence belongs to the universal ribosomal protein uL10 family. As to quaternary structure, P0 forms a pentameric complex by interaction with dimers of P1 and P2.

Functionally, ribosomal protein P0 is the functional equivalent of E.coli protein L10. In Homo sapiens (Human), this protein is Putative ribosomal protein uL10-like (RPLP0P6).